Here is a 501-residue protein sequence, read N- to C-terminus: MTTFFNKLFTGASSSSSAAASSGMDLGSMESLCAAINELCSEKHVSENVGELAAGIVRKNKELFEKKSNDVEAFLLHCSPNVGSAAMVAAIKGMFDTSAAKNNETGTDRAVELLNHYVDENNFVGGHLKLVPEIIFPLLRDVGLYCLEKKNKPEIGQRIIMKALGSMFPRNGSNAPNVLTSAHGVLFACALETKDYASVEPFIDLHVDEIANENCIQDQEKSDNRERDFGDVFLGRMKKGAAFGSQPVAHNPHLHPKYVLDYLYNGACILIELKRFEDALFLLEICVGMPAFSVQDQHLDSFKKYVLISLILKGKVDVTENGDKSAIRHFKTKSPEYKQFSEIRFSRSSNTHSAVESLVKSAKDRLRKDGNTEIAKYLVVEMKKKTIMSLTRMFTSIRISEIEELAFLKSRDQVTELIGQLVEEQRITVRIDGDMVFWTELSPVPSKNDVENKIRIVDHLNTLLHEKNTTMKAGSGRMRPSVMYNEDEGLSMPPTESKFFS.

Residues 275–445 (RFEDALFLLE…VFWTELSPVP (171 aa)) form the PCI domain.

It belongs to the CSN3 family. Component of the CSN complex, probably composed of csn-1, csn-2, csn-3, csn-4, csn-5, csn-6 and csn-7. Within the complex it probably interacts directly with csn-2 and csn-4. May interact with itself.

The protein localises to the cytoplasm. It localises to the nucleus. Its function is as follows. Component of the COP9 signalosome complex (CSN), a complex involved in various cellular and developmental processes. The CSN complex is an essential regulator of the ubiquitin (Ubl) conjugation pathway by mediating the deneddylation of the cullin subunits of the SCF-type E3 ligase complexes, leading to decrease the Ubl ligase activity of SCF. The CSN complex plays an essential role in embryogenesis and oogenesis and is required to regulate microtubule stability in the early embryo. Mediates mei-3/katanin targeting for degradation at the meiosis to mitosis transition via deneddylation of cul-3. In Caenorhabditis elegans, this protein is COP9 signalosome complex subunit 3 (csn-3).